The primary structure comprises 248 residues: Ribonuclease PH (248 aa).

Phosphate is bound by residues Arg-86 and 124–126 (GTR).

It belongs to the RNase PH family. As to quaternary structure, homohexameric ring arranged as a trimer of dimers.

The enzyme catalyses tRNA(n+1) + phosphate = tRNA(n) + a ribonucleoside 5'-diphosphate. Its function is as follows. Phosphorolytic 3'-5' exoribonuclease that plays an important role in tRNA 3'-end maturation. Removes nucleotide residues following the 3'-CCA terminus of tRNAs; can also add nucleotides to the ends of RNA molecules by using nucleoside diphosphates as substrates, but this may not be physiologically important. Probably plays a role in initiation of 16S rRNA degradation (leading to ribosome degradation) during starvation. The polypeptide is Ribonuclease PH (Listeria welshimeri serovar 6b (strain ATCC 35897 / DSM 20650 / CCUG 15529 / CIP 8149 / NCTC 11857 / SLCC 5334 / V8)).